Consider the following 608-residue polypeptide: Signal transduction histidine-protein kinase AtoS (608 aa).

Residues 1–15 (MHYMKWIYPRRLRNQ) lie on the Cytoplasmic side of the membrane. A helical membrane pass occupies residues 16 to 36 (MILMAILMVIVPTLTIGYIVE). Topologically, residues 37–189 (TEGRSAVLSE…DIRRQAWKMD (153 aa)) are periplasmic. A helical transmembrane segment spans residues 190-210 (VRIIIVLTAGLLISLLLIVLF). The Cytoplasmic portion of the chain corresponds to 211–608 (SRRLSANIDI…PINPQGNQTV (398 aa)). An HAMP domain is found at 212–262 (RRLSANIDIITDGLSTLAQNIPTRLPQLPGEMGQISQSVNNLAQALRETRT). A PAS domain is found at 260–305 (TRTLNDLIIENAADGVIAIDRQGDVTTMNPAAEVITGYQRHELVGQ). In terms of domain architecture, PAC spans 326–382 (HGTEHVALEISFPGRDRTIELSVTTSRIHNTHGEMIGALVIFSDLTARKETQRRMAQ). Residues 395 to 602 (GVAHEVRNPL…TFTLILPINP (208 aa)) form the Histidine kinase domain. Histidine 398 is subject to Phosphohistidine; by autocatalysis.

As to quaternary structure, homodimer. In terms of processing, autophosphorylated. Each AtoS molecule may phosphorylate its partner within the dimer rather than phosphorylating itself.

The protein resides in the cell inner membrane. It carries out the reaction ATP + protein L-histidine = ADP + protein N-phospho-L-histidine.. Member of the two-component regulatory system AtoS/AtoC. In the presence of acetoacetate, AtoS/AtoC stimulates the expression of the atoDAEB operon, leading to short chain fatty acid catabolism and activation of the poly-(R)-3-hydroxybutyrate (cPHB) biosynthetic pathway. Also induces the operon in response to spermidine. Involved in the regulation of motility and chemotaxis, via transcriptional induction of the flagellar regulon. AtoS is a membrane-associated kinase that phosphorylates and activates AtoC in response to environmental signals. The protein is Signal transduction histidine-protein kinase AtoS (atoS) of Escherichia coli (strain K12).